Here is a 630-residue protein sequence, read N- to C-terminus: A-type voltage-gated potassium channel KCND2 (630 aa).

The Cytoplasmic segment spans residues 1-184 (MAAGVAAWLP…FENPHTSTMA (184 aa)). Positions 2–20 (AAGVAAWLPFARAAAIGWM) are interaction with KCNIP1, KCNIP2, and other family members. Phosphothreonine is present on Thr-38. Positions 71-90 (ERDFFYHPETQQYFFDRDPD) are interaction with KCNIP1. Residues His-105, Cys-111, Cys-132, and Cys-133 each contribute to the Zn(2+) site. A helical transmembrane segment spans residues 185 to 206 (LVFYYVTGFFIAVSVIANVVET). Residues 207-226 (VPCGSSPGHIKELPCGERYA) lie on the Extracellular side of the membrane. A helical membrane pass occupies residues 227 to 249 (VAFFCLDTACVMIFTVEYLLRLA). Residues 250–256 (AAPSRYR) are Cytoplasmic-facing. Residues 257–281 (FVRSVMSIIDVVAILPYYIGLVMTD) form a helical membrane-spanning segment. Residues 282–287 (NEDVSG) are Extracellular-facing. A helical; Voltage-sensor membrane pass occupies residues 288–307 (AFVTLRVFRVFRIFKFSRHS). Residues 308-321 (QGLRILGYTLKSCA) are Cytoplasmic-facing. An S4-S5 linker region spans residues 308-321 (QGLRILGYTLKSCA). A helical membrane pass occupies residues 322–345 (SELGFLLFSLTMAIIIFATVMFYA). At 346 to 357 (EKGSSASKFTSI) the chain is on the extracellular side. An intramembrane region (helical) is located at residues 358 to 369 (PAAFWYTIVTMT). Residues Thr-370, Leu-371, Gly-372, and Tyr-373 each coordinate K(+). Positions 370-375 (TLGYGD) match the Selectivity filter motif. Residues 370-377 (TLGYGDMV) lie within the membrane without spanning it. The Extracellular segment spans residues 378 to 380 (PKT). Residues 381–403 (IAGKIFGSICSLSGVLVIALPVP) traverse the membrane as a helical segment. The Cytoplasmic segment spans residues 404 to 630 (VIVSNFSRIY…GGNIVRVSAL (227 aa)). A required for dendritic targeting region spans residues 474 to 489 (FETQHHHLLHCLEKTT). The important for normal channel activation and inactivation, for interaction with KCNIP2, and probably other family members as well stretch occupies residues 474–630 (FETQHHHLLH…GGNIVRVSAL (157 aa)). Phosphoserine is present on residues Ser-548, Ser-552, Ser-572, and Ser-575. A disordered region spans residues 600–622 (IPTPPVTTPEGDDRPESPEYSGG). A phosphothreonine mark is found at Thr-602 and Thr-607. Ser-616 bears the Phosphoserine mark. Residues 627 to 630 (VSAL) carry the PDZ-binding motif.

Belongs to the potassium channel family. D (Shal) (TC 1.A.1.2) subfamily. Kv4.2/KCND2 sub-subfamily. As to quaternary structure, homotetramer or heterotetramer with KCND1 or KCND3. Associates with the regulatory subunits KCNIP2, KCNIP3 and KCNIP4. Interacts with the regulatory subunit KCNIP1; this interaction mediates the capture of both the N- and C-terminus of KCND2, preventing N-type inactivation and stabilizing the S6 conformation, thereby accelerating closed state inactivation and recovery. In vivo, probably exists as heteromeric complex containing variable proportions of KCND1, KCND2, KCND3, KCNIP1, KCNIP2, KCNIP3, KCNIP4, DPP6 and DPP10. The tetrameric channel can associate with up to four regulatory subunits, such as KCNIP2 or KCNIP4. Interaction with four KCNIP4 chains does not reduce interaction with DPP10. Interacts with DLG4 and NCS1/FREQ. Interacts with DLG1. Probably part of a complex consisting of KCNIP1, KCNIP2 isoform 3 and KCND2. Interacts with FLNA, FLNC and DPP10. Identified in a complex with cAMP-dependent protein kinase (PKA), CAV3, AKAP6 and KCND3 in cardiac myocytes. Interacts (via S1 and S2 helices) with DPP6; this interaction stabilizes the conformation of the S1-S2 helices and facilitates S4 conformational change, including S4 sliding up and down, thereby accelerating activation, inactivation, and recovery. In terms of processing, phosphorylation in response to MAPK activation is increased in stimulated dendrites. Interaction with KCNIP2 and DPP6 propomtes phosphorylation by PKA at Ser-552. Phosphorylation at Ser-552 has no effect on interaction with KCNIP3, but is required for the regulation of channel activity by KCNIP3. Phosphorylation at Ser-552 leads to KCND2 internalization. Phosphorylated by MAPK in response to signaling via the metabotropic glutamate receptor GRM5. Phosphorylation at Ser-616 is required for the down-regulation of neuronal A-type currents in response to signaling via GRM5.

The protein resides in the cell membrane. It is found in the cell projection. The protein localises to the dendrite. Its subcellular location is the synapse. It localises to the perikaryon. The protein resides in the postsynaptic cell membrane. It is found in the dendritic spine. The protein localises to the sarcolemma. Its subcellular location is the cell junction. It localises to the membrane. The protein resides in the caveola. The catalysed reaction is K(+)(in) = K(+)(out). Its function is as follows. Voltage-gated potassium channel that mediates transmembrane potassium transport in excitable membranes, primarily in the brain, but also in rodent heart. Mediates the major part of the dendritic A-type current I(SA) in brain neurons. This current is activated at membrane potentials that are below the threshold for action potentials. It regulates neuronal excitability, prolongs the latency before the first spike in a series of action potentials, regulates the frequency of repetitive action potential firing, shortens the duration of action potentials and regulates the back-propagation of action potentials from the neuronal cell body to the dendrites. Contributes to the regulation of the circadian rhythm of action potential firing in suprachiasmatic nucleus neurons, which regulates the circadian rhythm of locomotor activity. Functions downstream of the metabotropic glutamate receptor GRM5 and plays a role in neuronal excitability and in nociception mediated by activation of GRM5. Mediates the transient outward current I(to) in rodent heart left ventricle apex cells, but not in human heart, where this current is mediated by another family member. Forms tetrameric potassium-selective channels through which potassium ions pass in accordance with their electrochemical gradient. The channel alternates between opened and closed conformations in response to the voltage difference across the membrane. Can form functional homotetrameric channels and heterotetrameric channels that contain variable proportions of KCND2 and KCND3; channel properties depend on the type of pore-forming alpha subunits that are part of the channel. In vivo, membranes probably contain a mixture of heteromeric potassium channel complexes. Interaction with specific isoforms of the regulatory subunits KCNIP1, KCNIP2, KCNIP3 or KCNIP4 strongly increases expression at the cell surface and thereby increases channel activity; it modulates the kinetics of channel activation and inactivation, shifts the threshold for channel activation to more negative voltage values, shifts the threshold for inactivation to less negative voltages and accelerates recovery after inactivation. Likewise, interaction with DPP6 or DPP10 promotes expression at the cell membrane and regulates both channel characteristics and activity. Upon depolarization, the channel goes from a resting closed state (C state) to an activated but non-conducting state (C* state), from there, the channel may either inactivate (I state) or open (O state). The chain is A-type voltage-gated potassium channel KCND2 from Mustela putorius furo (European domestic ferret).